The chain runs to 362 residues: F-box protein At2g14710 (362 aa).

Residues M1–H47 form the F-box domain.

In Arabidopsis thaliana (Mouse-ear cress), this protein is F-box protein At2g14710.